Reading from the N-terminus, the 415-residue chain is Protein-lysine N-trimethyltransferase SMYD5 (415 aa).

Positions 20-351 (NCVDVRFINN…PGEEICISYL (332 aa)) constitute an SET domain. Residues 95–135 (PHPELCKVRPDRHQACPQCQVMYCSSECRQAAMDQYHKILC) form an MYND-type zinc finger. Tyr350 provides a ligand contact to S-adenosyl-L-methionine. The tract at residues 388–415 (DMTSEDEEEVEGEGETEGEDMEDEMTDV) is disordered.

Belongs to the class V-like SAM-binding methyltransferase superfamily. As to expression, expressed at high levels in the ovary and at lower levels in the fin, testis and brain.

The protein resides in the cytoplasm. The catalysed reaction is L-lysyl-[protein] + 3 S-adenosyl-L-methionine = N(6),N(6),N(6)-trimethyl-L-lysyl-[protein] + 3 S-adenosyl-L-homocysteine + 3 H(+). It carries out the reaction L-lysyl(20)-[histone H4] + 3 S-adenosyl-L-methionine = N(6),N(6),N(6)-trimethyl-L-lysyl(20)-[histone H4] + 3 S-adenosyl-L-homocysteine + 3 H(+). The enzyme catalyses L-lysyl(36)-[histone H3] + 3 S-adenosyl-L-methionine = N(6),N(6),N(6)-trimethyl-L-lysyl(36)-[histone H3] + 3 S-adenosyl-L-homocysteine + 3 H(+). Its function is as follows. Protein-lysine N-trimethyltransferase that specifically catalyzes trimethylation of 'Lys-22' of the RPL40/eL40 subunit of the 60S ribosome, thereby promoting translation elongation and protein synthesis. May also act as a histone methyltransferase in the context of histone octamers, but not on nucleosome substrates: trimethylates 'Lys-36' of histone H3 and 'Lys-20' of histone H4 to form H3K36me3 and H4K20me3, respectively. The histone methyltransferase activity, which is independent of its SET domain, is however unsure in vivo. Plays a crucial role in hematopoiesis during embryogenesis by negatively regulating expression of genes related to both primitive and definitive hematopoiesis. This is Protein-lysine N-trimethyltransferase SMYD5 from Danio rerio (Zebrafish).